Here is a 237-residue protein sequence, read N- to C-terminus: MQFAAPLVPGRLVQRYKRFLADIDTDDGRVTVHCPNPGAMLGLNAPGARVLLSRSSNPARKLPLTWELVEAELPGGAQWVGINTQRPNALVAEAFRAGAIAALAGHDALRPEVRYAEASRVDFLASGAEAGPCHVEVKNCHLMRRAGLAEFPDCKAARSARHMRDLAQVVADGGRALVVIVVQMRAEAFDVARDIDPAFDRAFREARAAGVAVRAYRCAVGPEGVAIAEEIPVITPP.

It belongs to the SfsA family.

This Methylobacterium radiotolerans (strain ATCC 27329 / DSM 1819 / JCM 2831 / NBRC 15690 / NCIMB 10815 / 0-1) protein is Sugar fermentation stimulation protein homolog.